Here is an 88-residue protein sequence, read N- to C-terminus: MAEAEKTVRTLTGRVVSDKMDKTITVLIERRVKHPIYGKYVKRSTKLHAHDETNQCHIGDKVTIRETRPVAKTKSWALVDILERAVEV.

This sequence belongs to the universal ribosomal protein uS17 family. Part of the 30S ribosomal subunit.

One of the primary rRNA binding proteins, it binds specifically to the 5'-end of 16S ribosomal RNA. In Pseudomonas savastanoi pv. phaseolicola (strain 1448A / Race 6) (Pseudomonas syringae pv. phaseolicola (strain 1448A / Race 6)), this protein is Small ribosomal subunit protein uS17.